Consider the following 441-residue polypeptide: Protein arginine methyltransferase NDUFAF7, mitochondrial (441 aa).

Residues 1 to 46 constitute a mitochondrion transit peptide; it reads MSVLLRSGLGPLCAVARAAIPFIWRGKYFSSGNEPAENPVTPMLRH.

This sequence belongs to the NDUFAF7 family. As to quaternary structure, interacts with NDUFS2.

The protein resides in the mitochondrion. The enzyme catalyses L-arginyl-[protein] + 2 S-adenosyl-L-methionine = N(omega),N(omega)'-dimethyl-L-arginyl-[protein] + 2 S-adenosyl-L-homocysteine + 2 H(+). In terms of biological role, arginine methyltransferase involved in the assembly or stability of mitochondrial NADH:ubiquinone oxidoreductase complex (complex I). Acts by mediating symmetric dimethylation of 'Arg-118' of NDUFS2 after it assembles into the complex I, stabilizing the early intermediate complex. This Homo sapiens (Human) protein is Protein arginine methyltransferase NDUFAF7, mitochondrial.